The primary structure comprises 342 residues: Protein RecA (342 aa).

65–72 (GPESSGKT) lines the ATP pocket.

This sequence belongs to the RecA family.

The protein resides in the cytoplasm. Functionally, can catalyze the hydrolysis of ATP in the presence of single-stranded DNA, the ATP-dependent uptake of single-stranded DNA by duplex DNA, and the ATP-dependent hybridization of homologous single-stranded DNAs. It interacts with LexA causing its activation and leading to its autocatalytic cleavage. This is Protein RecA from Teredinibacter turnerae (strain ATCC 39867 / T7901).